The primary structure comprises 432 residues: Adenylosuccinate synthetase (432 aa).

GTP is bound by residues 12-18 (GDEGKGK) and 40-42 (GHT). Catalysis depends on D13, which acts as the Proton acceptor. Positions 13 and 40 each coordinate Mg(2+). IMP contacts are provided by residues 13–16 (DEGK), 38–41 (NAGH), T131, R145, Q226, T241, and R305. The Proton donor role is filled by H41. 301–307 (ATTGRPR) contributes to the substrate binding site. Residues R307, 333–335 (KLD), and 415–417 (STG) each bind GTP.

This sequence belongs to the adenylosuccinate synthetase family. As to quaternary structure, homodimer. It depends on Mg(2+) as a cofactor.

The protein resides in the cytoplasm. It catalyses the reaction IMP + L-aspartate + GTP = N(6)-(1,2-dicarboxyethyl)-AMP + GDP + phosphate + 2 H(+). Its pathway is purine metabolism; AMP biosynthesis via de novo pathway; AMP from IMP: step 1/2. In terms of biological role, plays an important role in the de novo pathway of purine nucleotide biosynthesis. Catalyzes the first committed step in the biosynthesis of AMP from IMP. The sequence is that of Adenylosuccinate synthetase from Magnetococcus marinus (strain ATCC BAA-1437 / JCM 17883 / MC-1).